The sequence spans 172 residues: Chorion protein S18 (172 aa).

The first 17 residues, 1–17 (MMKFMCICLCAISAVSA), serve as a signal peptide directing secretion.

The protein belongs to the chorion protein S15/S18 family.

Its subcellular location is the secreted. Chorion membrane (egg shell) protein; plays a role in protecting the egg from the environment. The sequence is that of Chorion protein S18 (Cp18) from Drosophila melanogaster (Fruit fly).